A 74-amino-acid polypeptide reads, in one-letter code: ATP synthase subunit c (74 aa).

The next 2 helical transmembrane spans lie at 9–29 (IAIA…ASIF) and 51–71 (LIGA…AILL).

The protein belongs to the ATPase C chain family. F-type ATPases have 2 components, F(1) - the catalytic core - and F(0) - the membrane proton channel. F(1) has five subunits: alpha(3), beta(3), gamma(1), delta(1), epsilon(1). F(0) has three main subunits: a(1), b(2) and c(10-14). The alpha and beta chains form an alternating ring which encloses part of the gamma chain. F(1) is attached to F(0) by a central stalk formed by the gamma and epsilon chains, while a peripheral stalk is formed by the delta and b chains.

It is found in the cell inner membrane. Functionally, f(1)F(0) ATP synthase produces ATP from ADP in the presence of a proton or sodium gradient. F-type ATPases consist of two structural domains, F(1) containing the extramembraneous catalytic core and F(0) containing the membrane proton channel, linked together by a central stalk and a peripheral stalk. During catalysis, ATP synthesis in the catalytic domain of F(1) is coupled via a rotary mechanism of the central stalk subunits to proton translocation. Key component of the F(0) channel; it plays a direct role in translocation across the membrane. A homomeric c-ring of between 10-14 subunits forms the central stalk rotor element with the F(1) delta and epsilon subunits. The chain is ATP synthase subunit c from Orientia tsutsugamushi (strain Ikeda) (Rickettsia tsutsugamushi).